Here is a 737-residue protein sequence, read N- to C-terminus: Zinc finger protein 184 (737 aa).

Residues 28–99 (VTFKDVVVNF…DSCIPVGPLE (72 aa)) enclose the KRAB domain. Residue Ser117 is modified to Phosphoserine. Residue Lys185 forms a Glycyl lysine isopeptide (Lys-Gly) (interchain with G-Cter in SUMO2) linkage. 17 C2H2-type zinc fingers span residues 201–223 (CKCNECGKAFTYCSALIRHQRTH), 229–251 (YKCNECNKAFSRSENLINHQRIH), 257–279 (YKCDQCGKGFIEGPSLTQHQRIH), 285–307 (YKCDECGKAFSQRTHLVQHQRIH), 313–335 (YTCTECGKSFSQRGHFMEHQKIH), 341–363 (FKCEECEKTFTRSTHLTQHQKIH), 369–391 (YKCNECGKAFNGPSTFIRHHMIH), 397–419 (YECNECGKAFSQHSNLTQHQKTH), 425–447 (YDCAECGKAFSYWSSLAQHLKIH), 453–475 (YKCSDCGKAFSYCSSLTQHRRIH), 481–503 (FECSECGKAFSYLSNLNQHQKTH), 509–531 (YECKECGKAFIRSSSLAKHERIH), 537–559 (YQCHECGKTFSYGSSLIQHKKIH), 565–587 (YKCNECGRAFNQKIHLTQHKRIH), 593–615 (YACPKCGKTFRHCSSLAQHQKTH), 621–643 (YQCNKCEKTFSQNSRLTQHQRIH), and 649–671 (YKCSECDKCFTGSVHLTEHRSTH). The segment at 677 to 698 (YNSECPQTFSQSTYLTQHQKIH) adopts a C2H2-type 18; degenerate zinc-finger fold. Residues 704 to 726 (LGCEDCEKAFQCHSALTKHQRLH) form a C2H2-type 19 zinc finger.

This sequence belongs to the krueppel C2H2-type zinc-finger protein family.

The protein localises to the nucleus. Its function is as follows. May be involved in transcriptional regulation. This chain is Zinc finger protein 184 (Zfp184), found in Mus musculus (Mouse).